Here is a 401-residue protein sequence, read N- to C-terminus: (1R,4R,5S)-(-)-guaia-6,10(14)-diene synthase (401 aa).

Residues 1 to 21 form a disordered region; sequence MVKFDSGSESEMTNGDDLHIN. The Mg(2+) site is built by aspartate 134 and glutamate 139. Residues 134-138 carry the DDXXD motif motif; the sequence is DDQFD. Substrate is bound at residue arginine 242. 2 residues coordinate Mg(2+): asparagine 288 and serine 292. Lysine 295 contacts substrate. Aspartate 296 is a binding site for Mg(2+). 375-376 provides a ligand contact to substrate; that stretch reads RY.

Belongs to the terpene synthase family. It depends on Mg(2+) as a cofactor.

It carries out the reaction (2E,6E)-farnesyl diphosphate = (1R,4R,5S)-(-)-guaia-6,10(14)-diene + diphosphate. The protein operates within secondary metabolite biosynthesis; terpenoid biosynthesis. Catalyzes the conversion of (2E,6E)-farnesyl diphosphate (FPP) to yield the bicyclic sesquiterpene guaia-6,10(14)-diene via a 1,10-cyclization, which requires the abstraction of the pyrophosphate from FPP to yield the (E,E)-germacradienyl cation. The only accepted substrate is farnesyl diphosphate (FPP). The sequence is that of (1R,4R,5S)-(-)-guaia-6,10(14)-diene synthase from Fusarium proliferatum (strain ET1) (Orchid endophyte fungus).